We begin with the raw amino-acid sequence, 907 residues long: MKKRIDYLSNKQNKYSIRRFTVGTTSVIVGATILFGIGNHQAQASEQSNDTTQSSKNNASADSEKNNMIETPQLNTTANDTSDISANTNSANVDSTAKPMSTQTSNTTTTEPASTNETPQLTAIKDQATAAKMQDQTVPQEANSQVDNKTTNDANSIATNSELKNPQTLDLPQSSPQTISNAQGTSKPSVRTRAVRSLAVAEPVVNAADAKGTNVNDKVTAKDFQLEKTTFDPNQSGNTFMAANFTVTGQVKSGDYFTAKLPDSVTGNGDVDYSNSNNTMPIADIVNDKNEVVAKATYDILTKTYTFVFTDYVNDKQNINGKFSLPLFTDRAKAPKSGTYDANINIADEMFNNKITYNYSSPIAGIDKPNGANISSQIIGVDTASGQNTYKQTVFVNPKQRVLGNTWVYIKGYQDKIEESSGKVSATDTKLRIFEVNDTSKLSDSYYADPNDSNLKEVTDQFKDKITYKYQNVASINFGDINKTYVVLVEGHYDKTGKNLKTQVIQENVDPATGKDYSIFGWNNENVVRYGGGSADGDSAVNPKDPTPGPPVDPEPSPDPEPEPSPDPDPEPTPDPEPSPDPDPDSDSDSDSGSDSDSDSDSDSDSDSDSGSDSDSDSDSDSESDSESDSDSDSESDSDSDSDSESDSDSDSDSDSDSDSDSDSDSDSDSDSDSDSDSDSDSESDSDSDSDSESDSDSDSDSDSDSDSDSDSDSDSDSDSDSDSDSDSESDSDSDSDSDSDSDSDSDSDSDSDSDSDSDSDSDSDSESDSDSDSDSDSDSDSDSDSDSDSDSDSDSDSDSDSESDSDSDSDSDSDSDSDSDSDSDSDSDSDSDSRVTPPNNEQKAPSNPKGEVNHSNKVSKQHKTDALPETGDKSENTNATLFGAMMALLGSLLLFRKRKQDHKEKA.

A signal peptide spans 1 to 44 (MKKRIDYLSNKQNKYSIRRFTVGTTSVIVGATILFGIGNHQAQA). A YSIRK-G/S signaling motif motif is present at residues 15–26 (YSIRRFTVGTTS). Polar residues-rich tracts occupy residues 44-61 (ASEQ…NASA) and 68-101 (MIET…KPMS). The disordered stretch occupies residues 44–191 (ASEQSNDTTQ…AQGTSKPSVR (148 aa)). A ligand binding A region region spans residues 45–542 (SEQSNDTTQS…GSADGDSAVN (498 aa)). Residues 102–119 (TQTSNTTTTEPASTNETP) are compositionally biased toward low complexity. Over residues 134–189 (QDQTVPQEANSQVDNKTTNDANSIATNSELKNPQTLDLPQSSPQTISNAQGTSKPS) the composition is skewed to polar residues. The short motif at 272–276 (DYSNS) is the MIDAS-like motif element. A disordered region spans residues 530 to 879 (YGGGSADGDS…ETGDKSENTN (350 aa)). Positions 545–555 (DPTPGPPVDPE) are enriched in pro residues. Residues 556–831 (PSPDPEPEPS…SDSDSDSDSD (276 aa)) show a composition bias toward acidic residues. Residues 835 to 846 (RVTPPNNEQKAP) are compositionally biased toward polar residues. Residues 863–876 (HKTDALPETGDKSE) show a composition bias toward basic and acidic residues. Residues 868 to 872 (LPETG) carry the LPXTG sorting signal motif. Thr-871 is modified (pentaglycyl murein peptidoglycan amidated threonine). A propeptide spans 872-907 (GDKSENTNATLFGAMMALLGSLLLFRKRKQDHKEKA) (removed by sortase).

Belongs to the serine-aspartate repeat-containing protein (SDr) family. Post-translationally, proteolytically cleaved by aureolysin (aur). This cleavage leads to the inactivation of ClfB.

Its subcellular location is the secreted. It localises to the cell wall. Its function is as follows. Cell surface-associated protein implicated in virulence by promoting bacterial attachment to both alpha- and beta-chains of human fibrinogen and inducing the formation of bacterial clumps. In Staphylococcus aureus (strain MW2), this protein is Clumping factor B (clfB).